Reading from the N-terminus, the 362-residue chain is MADSSLVGGGEEPEERVIEAALRPKNLHDFVGQHRVRKQLSLVLEASRMRGRSADHVLLSGPPGLGKTTLSMIIAAEMNAPLRISSGPAIQHAGDLAAILSSLSEGEVLFLDEIHRMSRPAEEMLYMAMEDFRVDIVVGKGAGATAIPLELPPFTLVGATTRAGLLPGPLRDRFGFTGHLEFYSVEELELVLRRSAGLLDLKVNSAGFSEIAGRSRGTPRIANRLLRRVRDWALVHGIEQIDARTASAALDMYEVDKRGLDRLDRSVLEALITKFGGGPVGLSTLAIAVGEEPETVETVAEPYLVREGLLGRTPRGRIAMAPAWTHLGYAVPEGVFGQEALALFEVEDLGVEPVAEWLPNGQ.

The tract at residues 1 to 183 (MADSSLVGGG…FGFTGHLEFY (183 aa)) is large ATPase domain (RuvB-L). Residues leucine 22, arginine 23, glycine 64, lysine 67, threonine 68, threonine 69, 130-132 (EDF), arginine 173, tyrosine 183, and arginine 220 each bind ATP. Threonine 68 is a Mg(2+) binding site. The interval 184–254 (SVEELELVLR…TASAALDMYE (71 aa)) is small ATPAse domain (RuvB-S). Residues 257–362 (KRGLDRLDRS…PVAEWLPNGQ (106 aa)) are head domain (RuvB-H). The DNA site is built by arginine 312 and arginine 317.

The protein belongs to the RuvB family. Homohexamer. Forms an RuvA(8)-RuvB(12)-Holliday junction (HJ) complex. HJ DNA is sandwiched between 2 RuvA tetramers; dsDNA enters through RuvA and exits via RuvB. An RuvB hexamer assembles on each DNA strand where it exits the tetramer. Each RuvB hexamer is contacted by two RuvA subunits (via domain III) on 2 adjacent RuvB subunits; this complex drives branch migration. In the full resolvosome a probable DNA-RuvA(4)-RuvB(12)-RuvC(2) complex forms which resolves the HJ.

It is found in the cytoplasm. It catalyses the reaction ATP + H2O = ADP + phosphate + H(+). In terms of biological role, the RuvA-RuvB-RuvC complex processes Holliday junction (HJ) DNA during genetic recombination and DNA repair, while the RuvA-RuvB complex plays an important role in the rescue of blocked DNA replication forks via replication fork reversal (RFR). RuvA specifically binds to HJ cruciform DNA, conferring on it an open structure. The RuvB hexamer acts as an ATP-dependent pump, pulling dsDNA into and through the RuvAB complex. RuvB forms 2 homohexamers on either side of HJ DNA bound by 1 or 2 RuvA tetramers; 4 subunits per hexamer contact DNA at a time. Coordinated motions by a converter formed by DNA-disengaged RuvB subunits stimulates ATP hydrolysis and nucleotide exchange. Immobilization of the converter enables RuvB to convert the ATP-contained energy into a lever motion, pulling 2 nucleotides of DNA out of the RuvA tetramer per ATP hydrolyzed, thus driving DNA branch migration. The RuvB motors rotate together with the DNA substrate, which together with the progressing nucleotide cycle form the mechanistic basis for DNA recombination by continuous HJ branch migration. Branch migration allows RuvC to scan DNA until it finds its consensus sequence, where it cleaves and resolves cruciform DNA. This is Holliday junction branch migration complex subunit RuvB from Arthrobacter sp. (strain FB24).